A 371-amino-acid chain; its full sequence is Histidinol-phosphate aminotransferase (371 aa).

The residue at position 228 (Lys-228) is an N6-(pyridoxal phosphate)lysine.

It belongs to the class-II pyridoxal-phosphate-dependent aminotransferase family. Histidinol-phosphate aminotransferase subfamily. Pyridoxal 5'-phosphate serves as cofactor.

The catalysed reaction is L-histidinol phosphate + 2-oxoglutarate = 3-(imidazol-4-yl)-2-oxopropyl phosphate + L-glutamate. Its pathway is amino-acid biosynthesis; L-histidine biosynthesis; L-histidine from 5-phospho-alpha-D-ribose 1-diphosphate: step 7/9. The polypeptide is Histidinol-phosphate aminotransferase (Methanococcus maripaludis (strain C7 / ATCC BAA-1331)).